A 144-amino-acid chain; its full sequence is Bacilliredoxin BCE_4227 (144 aa).

The protein belongs to the bacilliredoxin family.

The polypeptide is Bacilliredoxin BCE_4227 (Bacillus cereus (strain ATCC 10987 / NRS 248)).